Reading from the N-terminus, the 1162-residue chain is Cartilage intermediate layer protein 2 (1162 aa).

The N-terminal stretch at 1–20 (MASPLPLLYLCLAALHLAGA) is a signal peptide. Positions 23 to 51 (ATPTEEHTSTARGLQGRPPDTGQPSPALE) are disordered. In terms of domain architecture, TSP type-1 spans 146-197 (EAAWGAWGAWGLCSKSCGLGRRLRRRSCQSSSGDTCPGSPQEAQKCVRSRCP). Intrachain disulfides connect C158-C191, C162-C196, C173-C181, and C314-C360. In terms of domain architecture, Ig-like C2-type spans 293–377 (PYLVKHPESR…TVRSRAALLT (85 aa)). The N-linked (GlcNAc...) asparagine glycan is linked to N330.

In terms of processing, may be cleaved into 2 chains possibly by a furin-like protease upon or preceding secretion. N-glycosylated. In terms of tissue distribution, expressed in articulated and meniscal cartilage (at protein level). Also detected in heart, skeletal muscle and brain. Not detected in growth plate cartilage.

The protein localises to the secreted. The protein resides in the extracellular space. It is found in the extracellular matrix. Functionally, may play a role in cartilage scaffolding. This Mus musculus (Mouse) protein is Cartilage intermediate layer protein 2.